The following is a 426-amino-acid chain: Enolase (426 aa).

A (2R)-2-phosphoglycerate-binding site is contributed by Q163. The Proton donor role is filled by E205. D242, E285, and D312 together coordinate Mg(2+). (2R)-2-phosphoglycerate-binding residues include K337, R366, S367, and K388. K337 functions as the Proton acceptor in the catalytic mechanism.

Belongs to the enolase family. Mg(2+) serves as cofactor.

It is found in the cytoplasm. The protein localises to the secreted. Its subcellular location is the cell surface. It carries out the reaction (2R)-2-phosphoglycerate = phosphoenolpyruvate + H2O. It functions in the pathway carbohydrate degradation; glycolysis; pyruvate from D-glyceraldehyde 3-phosphate: step 4/5. Its function is as follows. Catalyzes the reversible conversion of 2-phosphoglycerate (2-PG) into phosphoenolpyruvate (PEP). It is essential for the degradation of carbohydrates via glycolysis. The protein is Enolase of Desulfosudis oleivorans (strain DSM 6200 / JCM 39069 / Hxd3) (Desulfococcus oleovorans).